The sequence spans 70 residues: Large ribosomal subunit protein eL38 (70 aa).

It belongs to the eukaryotic ribosomal protein eL38 family.

The sequence is that of Large ribosomal subunit protein eL38 (RpL38) from Timarcha balearica.